Reading from the N-terminus, the 206-residue chain is Protein-methionine-sulfoxide reductase heme-binding subunit MsrQ (206 aa).

Transmembrane regions (helical) follow at residues 13–33 (IAIWLAATLPLLWLVLSINLG), 79–99 (LLGLWCFAWGTLHLLSYSILE), 116–136 (PYLTLGIISWLVLLALALTST), 147–167 (WQKLHNWVYVVAILAPIHYLW), and 169–189 (VKTLSPWPIIYAVMAALLLLL).

The protein belongs to the MsrQ family. Heterodimer of a catalytic subunit (MsrP) and a heme-binding subunit (MsrQ). It depends on FMN as a cofactor. Requires heme b as cofactor.

Its subcellular location is the cell inner membrane. In terms of biological role, part of the MsrPQ system that repairs oxidized periplasmic proteins containing methionine sulfoxide residues (Met-O), using respiratory chain electrons. Thus protects these proteins from oxidative-stress damage caused by reactive species of oxygen and chlorine generated by the host defense mechanisms. MsrPQ is essential for the maintenance of envelope integrity under bleach stress, rescuing a wide series of structurally unrelated periplasmic proteins from methionine oxidation. MsrQ provides electrons for reduction to the reductase catalytic subunit MsrP, using the quinone pool of the respiratory chain. This is Protein-methionine-sulfoxide reductase heme-binding subunit MsrQ from Yersinia pestis bv. Antiqua (strain Antiqua).